A 97-amino-acid polypeptide reads, in one-letter code: MANNKSAKKRIKIAERNRLINKSYKSTVRTLTKKTLENCEKYKKDPNDENKDLVKTSLNKAFSLIDKAVKKNVLHKNNGANRKSKINNLVKTTLATQ.

This sequence belongs to the bacterial ribosomal protein bS20 family.

Its function is as follows. Binds directly to 16S ribosomal RNA. The sequence is that of Small ribosomal subunit protein bS20 from Prochlorococcus marinus (strain MIT 9312).